The following is a 1302-amino-acid chain: DNA-directed RNA polymerase subunit beta (1302 aa).

It belongs to the RNA polymerase beta chain family. The RNAP catalytic core consists of 2 alpha, 1 beta, 1 beta' and 1 omega subunit. When a sigma factor is associated with the core the holoenzyme is formed, which can initiate transcription.

The enzyme catalyses RNA(n) + a ribonucleoside 5'-triphosphate = RNA(n+1) + diphosphate. Its function is as follows. DNA-dependent RNA polymerase catalyzes the transcription of DNA into RNA using the four ribonucleoside triphosphates as substrates. The polypeptide is DNA-directed RNA polymerase subunit beta (Spiroplasma citri).